The primary structure comprises 1483 residues: Cystic fibrosis transmembrane conductance regulator (1483 aa).

Over 1 to 77 (MQRSPLEKAS…KLINALRRCF (77 aa)) the chain is Cytoplasmic. A helical transmembrane segment spans residues 78–98 (FWKFMFYGILLYLGEVTKAVQ). The region spanning 81–365 (FMFYGILLYL…WAVQTWYDSL (285 aa)) is the ABC transmembrane type-1 1 domain. Residues 99-122 (PLLLGRIIASYDPDNKVERSIAIY) lie on the Extracellular side of the membrane. Residues 123–146 (LGIGLCLLFVVRTLLLHPAIFGLH) traverse the membrane as a helical segment. Over 147 to 195 (HIGMQMRIAMFSLIYKKTLKLSSRVLDKISIGQLISLLSNNLNKFDEGL) the chain is Cytoplasmic. Residues 196-216 (ALAHFVWIVPLQVTLLMGLLW) traverse the membrane as a helical segment. Topologically, residues 217–222 (ELLQAS) are extracellular. The helical transmembrane segment at 223–243 (AFCGLAFLIIVAFYQAGLGRM) threads the bilayer. Residues 244 to 298 (MMKYRDKRGGKINERLVITSEMIENIQSVKAYCWEEAMEKMIENLRQTELKLTRK) lie on the Cytoplasmic side of the membrane. A helical transmembrane segment spans residues 299–319 (AAYVRYCNSSAFFFSGFFVVF). Over 320–339 (LSVLPYALMKGIILRKIFTT) the chain is Extracellular. Residues 340-358 (ISFCIVLRMAVTRQFPWAV) traverse the membrane as a helical segment. The Cytoplasmic portion of the chain corresponds to 359–859 (QTWYDSLGAI…YLRYITIHKS (501 aa)). Residues W401, S434, 458–465 (GSTGAGKT), and Q493 contribute to the ATP site. Positions 423–646 (NGDNSLFFSN…RPDFSSKLMG (224 aa)) constitute an ABC transporter 1 domain. The S-palmitoyl cysteine moiety is linked to residue C524. Residues S549 and S660 each carry the phosphoserine modification. Residues 654–832 (SAERRNSILT…EEINEEDLKE (179 aa)) are disordered R region. S670 bears the Phosphoserine; by PKA mark. S686 is modified (phosphoserine). Residue K688 forms a Glycyl lysine isopeptide (Lys-Gly) (interchain with G-Cter in ubiquitin) linkage. S700 and S712 each carry phosphoserine. Phosphothreonine is present on T717. Residues S737, S768, S791, S796, and S814 each carry the phosphoserine modification. The chain crosses the membrane as a helical span at residues 860 to 880 (LIFVLIWCLIIFLAEVAVSLV). The ABC transmembrane type-1 2 domain occupies 860–1157 (LIFVLIWCLI…AVNSSIDVDS (298 aa)). The Extracellular portion of the chain corresponds to 881–920 (FLLLFEKSPRQDTGNVTKSSNNSSYGVIITNTSSYYIIYI). Residues N895, N901, N902, and N911 are each glycosylated (N-linked (GlcNAc...) asparagine). Residues 921–941 (YVGVADTLLALGLLRGLPLVH) form a discontinuously helical membrane-spanning segment. At 942 to 992 (TLITASKILHHKMLHSVLQAPMSTLNTLKAGGILNRFSKDIAILDDLLPLT) the chain is on the cytoplasmic side. A helical transmembrane segment spans residues 993–1013 (IFDFIQLILIVIGAVIVVSVL). Over 1014–1015 (EP) the chain is Extracellular. A helical transmembrane segment spans residues 1016-1036 (YIFLATVPVIIAFVMLRAYFL). At 1037–1097 (HTSQQLKQLE…TANWFLYLST (61 aa)) the chain is on the cytoplasmic side. The helical transmembrane segment at 1098-1118 (LRWFQMRIEMIFVIFFIAVTF) threads the bilayer. Residues 1119–1132 (ISILTTGDGEGRVG) lie on the Extracellular side of the membrane. A helical membrane pass occupies residues 1133–1153 (IILTLAMNIMNTLQWAVNSSI). Over 1154–1483 (DVDSLMRSVS…TEEEVQETRL (330 aa)) the chain is Cytoplasmic. The ABC transporter 2 domain occupies 1213 to 1446 (MTVKDLTAKY…KSLFRQAISN (234 aa)). ATP-binding positions include Y1222 and 1247 to 1254 (GRTGSGKS). Residues 1389–1483 (RTIKQAFADC…TEEEVQETRL (95 aa)) are interaction with GORASP2. Residue C1398 is the site of S-palmitoyl cysteine attachment. Residues S1447 and S1459 each carry the phosphoserine modification. Basic residues predominate over residues 1455–1465 (HRNSSKHKSRS). Positions 1455–1483 (HRNSSKHKSRSKIAALKEETEEEVQETRL) are disordered. The span at 1473–1483 (ETEEEVQETRL) shows a compositional bias: acidic residues. Positions 1481–1483 (TRL) match the PDZ-binding motif.

Belongs to the ABC transporter superfamily. ABCC family. CFTR transporter (TC 3.A.1.202) subfamily. Monomer; does not require oligomerization for channel activity. May form oligomers in the membrane. Interacts with SLC26A3, SLC26A6 and NHERF1. Interacts with SHANK2. Interacts with MYO6. Interacts (via C-terminus) with GOPC (via PDZ domain); this promotes CFTR internalization and thereby decreases channel activity. Interacts with SLC4A7 through NHERF1. Found in a complex with MYO5B and RAB11A. Interacts with ANO1. Interacts with SLC26A8. Interacts with AHCYL1; the interaction increases CFTR activity. Interacts with CSE1L. The core-glycosylated form interacts with GORASP2 (via PDZ GRASP-type 1 domain) in respone to ER stress. Interacts with MARCHF2; the interaction leads to CFTR ubiqtuitination and degradation. Interacts with ADGRG2. N-glycosylated. Post-translationally, phosphorylated; cAMP treatment promotes phosphorylation and activates the channel. Dephosphorylation decreases the ATPase activity (in vitro). Phosphorylation at PKA sites activates the channel. Phosphorylation at PKC sites enhances the response to phosphorylation by PKA. Phosphorylated by AMPK; this inhibits channel activity. In terms of processing, ubiquitinated, leading to its degradation in the lysosome. Deubiquitination by USP10 in early endosomes enhances its endocytic recycling to the cell membrane. Ubiquitinated by RNF185 during ER stress. Ubiquitinated by MARCHF2.

It is found in the apical cell membrane. The protein resides in the early endosome membrane. It localises to the cell membrane. Its subcellular location is the recycling endosome membrane. The protein localises to the endoplasmic reticulum membrane. It is found in the nucleus. It catalyses the reaction ATP + H2O + closed Cl(-) channel = ADP + phosphate + open Cl(-) channel.. The catalysed reaction is chloride(in) = chloride(out). The enzyme catalyses hydrogencarbonate(in) = hydrogencarbonate(out). It carries out the reaction ATP + H2O = ADP + phosphate + H(+). In terms of biological role, epithelial ion channel that plays an important role in the regulation of epithelial ion and water transport and fluid homeostasis. Mediates the transport of chloride ions across the cell membrane. The ion channel is also permeable to HCO(3)(-); selectivity depends on the extracellular chloride concentration. Exerts its function also by modulating the activity of other ion channels and transporters. Contributes to the regulation of the pH and the ion content of the epithelial fluid layer. Modulates the activity of the epithelial sodium channel (ENaC) complex, in part by regulating the cell surface expression of the ENaC complex. May regulate bicarbonate secretion and salvage in epithelial cells by regulating the transporter SLC4A7. Can inhibit the chloride channel activity of ANO1. Plays a role in the chloride and bicarbonate homeostasis during sperm epididymal maturation and capacitation. This Atelerix albiventris (Middle-African hedgehog) protein is Cystic fibrosis transmembrane conductance regulator.